The following is a 318-amino-acid chain: Ribose-phosphate pyrophosphokinase 2 (318 aa).

Position 96 to 101 (96 to 101) interacts with ATP; the sequence is RQDKKD. Mg(2+) contacts are provided by aspartate 128, histidine 130, aspartate 139, and aspartate 143. ATP is bound at residue histidine 130. The interval 212-227 is binding of phosphoribosylpyrophosphate; the sequence is KDRVAILVDDMADTCG.

This sequence belongs to the ribose-phosphate pyrophosphokinase family. Homodimer. The active form is probably a hexamer composed of 3 homodimers. Mg(2+) serves as cofactor.

It catalyses the reaction D-ribose 5-phosphate + ATP = 5-phospho-alpha-D-ribose 1-diphosphate + AMP + H(+). The protein operates within metabolic intermediate biosynthesis; 5-phospho-alpha-D-ribose 1-diphosphate biosynthesis; 5-phospho-alpha-D-ribose 1-diphosphate from D-ribose 5-phosphate (route I): step 1/1. With respect to regulation, activated by magnesium and inorganic phosphate. Competitively or non-competitively inhibited by ADP, 2,3-bisphosphoglyceride or GDP. In terms of biological role, catalyzes the synthesis of phosphoribosylpyrophosphate (PRPP) that is essential for nucleotide synthesis. The chain is Ribose-phosphate pyrophosphokinase 2 (PRPS2) from Homo sapiens (Human).